The following is a 242-amino-acid chain: Phosducin-like protein 2 (242 aa).

The 168-residue stretch at 34 to 201 (VLRLQKEAMV…LEWKLAEVGA (168 aa)) folds into the Phosducin domain. The thioredoxin fold stretch occupies residues 89-242 (FGELREISGN…SSNSDSEDTK (154 aa)).

Belongs to the phosducin family. As to quaternary structure, interacts with the CCT chaperonin complex and actin.

The protein resides in the endoplasmic reticulum. In terms of biological role, essential for male fertility, spermiogenesis and acrosome formation. The protein is Phosducin-like protein 2 (PDCL2) of Bos taurus (Bovine).